Consider the following 226-residue polypeptide: Choline transport system permease protein OpuBD (226 aa).

The ABC transmembrane type-1 domain maps to Phe-22–Met-202. Transmembrane regions (helical) follow at residues Leu-27 to Ile-47, Arg-52 to Met-72, Leu-73 to Leu-93, Ala-148 to Gly-168, and Ala-182 to Met-202.

Belongs to the binding-protein-dependent transport system permease family. CysTW subfamily.

Its subcellular location is the cell membrane. Its function is as follows. Involved in a high affinity multicomponent binding-protein-dependent transport system for choline; probably responsible for the translocation of the substrate across the membrane. The sequence is that of Choline transport system permease protein OpuBD (opuBD) from Bacillus subtilis (strain 168).